The following is a 160-amino-acid chain: Transcription elongation factor GreA (160 aa).

The stretch at Met1–Arg72 forms a coiled coil.

This sequence belongs to the GreA/GreB family.

Necessary for efficient RNA polymerase transcription elongation past template-encoded arresting sites. The arresting sites in DNA have the property of trapping a certain fraction of elongating RNA polymerases that pass through, resulting in locked ternary complexes. Cleavage of the nascent transcript by cleavage factors such as GreA or GreB allows the resumption of elongation from the new 3'terminus. GreA releases sequences of 2 to 3 nucleotides. The chain is Transcription elongation factor GreA from Streptococcus pneumoniae (strain ATCC 700669 / Spain 23F-1).